The chain runs to 217 residues: Thymidylate kinase (217 aa).

11 to 18 (GLEGAGKS) is an ATP binding site.

The protein belongs to the thymidylate kinase family.

It catalyses the reaction dTMP + ATP = dTDP + ADP. Its function is as follows. Phosphorylation of dTMP to form dTDP in both de novo and salvage pathways of dTTP synthesis. The chain is Thymidylate kinase from Alkalilimnicola ehrlichii (strain ATCC BAA-1101 / DSM 17681 / MLHE-1).